The following is a 135-amino-acid chain: Large ribosomal subunit protein eL27y (135 aa).

The protein belongs to the eukaryotic ribosomal protein eL27 family.

The sequence is that of Large ribosomal subunit protein eL27y (RPL27B) from Arabidopsis thaliana (Mouse-ear cress).